Here is a 695-residue protein sequence, read N- to C-terminus: U1 snRNP-associated protein usp107 (695 aa).

The segment covering 85 to 96 has biased composition (basic and acidic residues); sequence RDNESQQKDRKN. The tract at residues 85–134 is disordered; that stretch reads RDNESQQKDRKNLPRNQKSNEIQEKQTFQTPSSEKSTTERESRPFVPPNS. The segment covering 98–113 has biased composition (polar residues); that stretch reads PRNQKSNEIQEKQTFQ. The 83-residue stretch at 139-221 folds into the RRM domain; that stretch reads RMLFIGNIPK…PSTRLSLITD (83 aa). Residues 265-369 are a coiled coil; that stretch reads DVRSRIERAA…NLLSKHRISR (105 aa). Basic and acidic residues-rich tracts occupy residues 487–506 and 548–561; these read EEDA…RTRG and SERR…RLLL. Disordered regions lie at residues 487-509 and 540-590; these read EEDA…GEGA and QTKK…AEKT. Positions 605–695 constitute a PWI domain; sequence ESLWALPIDW…HVLLILRSEA (91 aa).

Component of the U1 snRNP particle, a subcomplex of the spliceosome. Interacts with prp5 and usp102.

It is found in the cytoplasm. The protein resides in the nucleus. In terms of biological role, component of the U1 snRNP particle, which recognizes and binds the 5'-splice site of pre-mRNA. Together with other non-snRNP factors, U1 snRNP forms the spliceosomal commitment complex, that targets pre-mRNA to the splicing pathway. This chain is U1 snRNP-associated protein usp107 (usp107), found in Schizosaccharomyces pombe (strain 972 / ATCC 24843) (Fission yeast).